Consider the following 157-residue polypeptide: Probable succinate transporter subunit YjjB (157 aa).

Helical transmembrane passes span 8-28 (LALA…AMVF), 50-70 (MILM…SMLV), 87-107 (VFTV…TAMI), and 129-149 (FLTA…PGLW).

This sequence belongs to the ThrE exporter (TC 2.A.79) family. In terms of assembly, the transporter is composed of YjjB and YjjP.

The protein localises to the cell inner membrane. Involved in succinate export with YjjP. Both proteins are required for export. In Shigella flexneri serotype 5b (strain 8401), this protein is Probable succinate transporter subunit YjjB.